We begin with the raw amino-acid sequence, 300 residues long: Alpha-tubulin N-acetyltransferase 1 (300 aa).

The N-acetyltransferase domain occupies 1-190 (MEFPFDVDAL…NNFVIFEGFF (190 aa)). Lys56 bears the N6-acetyllysine; by autocatalysis mark. 124–137 (FYIHESLQRHGHGR) is a binding site for acetyl-CoA. Residue Lys146 is modified to N6-acetyllysine; by autocatalysis. 160-169 (SQKLLKFLNK) contacts acetyl-CoA. Residues Lys210 and Lys221 each carry the N6-acetyllysine; by autocatalysis modification. Disordered stretches follow at residues 229 to 263 (PLNR…RPFV) and 280 to 300 (TARL…RRTR). Ser249 and Ser253 each carry phosphoserine. Arg282 is subject to Asymmetric dimethylarginine. Ser292 carries the phosphoserine modification. Arg300 bears the Omega-N-methylarginine mark.

It belongs to the acetyltransferase ATAT1 family. As to quaternary structure, component of the BBSome complex. Interacts with AP2 alpha-adaptins, including AP2A2, but not with AP1 gamma-adaptin (AP1G1/AP1G2); this interaction is required for efficient alpha-tubulin acetylation, hence clathrin-coated pits are sites of microtubule acetylation. Autoacetylation strongly increases tubulin acetylation.

It localises to the cytoplasm. It is found in the membrane. The protein resides in the clathrin-coated pit. The protein localises to the cell junction. Its subcellular location is the focal adhesion. It localises to the cell projection. It is found in the axon. The protein resides in the cytoskeleton. The protein localises to the spindle. It catalyses the reaction L-lysyl-[alpha-tubulin] + acetyl-CoA = N(6)-acetyl-L-lysyl-[alpha-tubulin] + CoA + H(+). Specifically acetylates 'Lys-40' in alpha-tubulin on the lumenal side of microtubules. Promotes microtubule destabilization and accelerates microtubule dynamics; this activity may be independent of acetylation activity. Acetylates alpha-tubulin with a slow enzymatic rate, due to a catalytic site that is not optimized for acetyl transfer. Enters the microtubule through each end and diffuses quickly throughout the lumen of microtubules. Acetylates only long/old microtubules because of its slow acetylation rate since it does not have time to act on dynamically unstable microtubules before the enzyme is released. Required for normal sperm flagellar function. Promotes directional cell locomotion and chemotaxis, through AP2A2-dependent acetylation of alpha-tubulin at clathrin-coated pits that are concentrated at the leading edge of migrating cells. May facilitate primary cilium assembly. This chain is Alpha-tubulin N-acetyltransferase 1, found in Sus scrofa (Pig).